Consider the following 1025-residue polypeptide: DNA ligase 4 (1025 aa).

Residues Met1–Val36 form a disordered region. ATP is bound by residues Glu289, Lys291, Leu292, Arg296, Glu349, Phe387, Glu447, Lys452, Lys469, and Lys471. Lys291 serves as the catalytic N6-AMP-lysine intermediate. Position 349 (Glu349) interacts with Mg(2+). Mg(2+) is bound at residue Glu447. The region spanning Val667–Phe763 is the BRCT 1 domain. Positions Ala773–Lys904 are disordered. Composition is skewed to acidic residues over residues Glu775–Gly785 and Ser806–Ala816. Basic and acidic residues predominate over residues Pro817–Ser838. Acidic residues predominate over residues Asp845–Asp870. Residues Arg891–Lys904 show a composition bias toward basic and acidic residues. The BRCT 2 domain maps to Asp915–Pro1025.

It belongs to the ATP-dependent DNA ligase family. Mg(2+) serves as cofactor.

It is found in the nucleus. The catalysed reaction is ATP + (deoxyribonucleotide)n-3'-hydroxyl + 5'-phospho-(deoxyribonucleotide)m = (deoxyribonucleotide)n+m + AMP + diphosphate.. DNA ligase involved in DNA non-homologous end joining (NHEJ); required for double-strand break (DSB) repair. The protein is DNA ligase 4 (LIG4) of Coprinopsis cinerea (Inky cap fungus).